The primary structure comprises 185 residues: Ribosome-recycling factor (185 aa).

This sequence belongs to the RRF family.

It localises to the cytoplasm. Functionally, responsible for the release of ribosomes from messenger RNA at the termination of protein biosynthesis. May increase the efficiency of translation by recycling ribosomes from one round of translation to another. This Azoarcus sp. (strain BH72) protein is Ribosome-recycling factor.